Here is a 1015-residue protein sequence, read N- to C-terminus: Putative ankyrin repeat protein R96 (1015 aa).

Basic residues predominate over residues 1-14; it reads MSTVKKSSKKKSSK. A disordered region spans residues 1-37; that stretch reads MSTVKKSSKKKSSKKSSSGNESSKKSSPKIVPKHTAK. ANK repeat units lie at residues 136–165, 168–201, 202–231, 340–370, 374–403, 456–485, 498–527, and 535–564; these read NGHKVLKILVYENDIPSIIALVENGANIDF, APSNILHICASRNYPVLLKYALSRNEIDINAVNI, DGRSPLYLACLYLNKECIKILLDNGADVEV, LGHNAINTSIMFCNNSLIKYFVDKTDLDFQA, NITNPIQMLVNHGYIDYVETILNRNPKIVS, SGYRPIEVAIRYCSIDVIKELLKYNTTIFA, NNNDIISFATQLGRFDVVTYLIQENVQFQL, and TVPTALLIAIVYHRKNFIQFFLELPQITDC.

The sequence is that of Putative ankyrin repeat protein R96 from Acanthamoeba polyphaga mimivirus (APMV).